Reading from the N-terminus, the 195-residue chain is ATP-dependent Clp protease proteolytic subunit (195 aa).

The active-site Nucleophile is the S98. H123 is a catalytic residue.

The protein belongs to the peptidase S14 family. As to quaternary structure, fourteen ClpP subunits assemble into 2 heptameric rings which stack back to back to give a disk-like structure with a central cavity, resembling the structure of eukaryotic proteasomes.

The protein resides in the cytoplasm. It catalyses the reaction Hydrolysis of proteins to small peptides in the presence of ATP and magnesium. alpha-casein is the usual test substrate. In the absence of ATP, only oligopeptides shorter than five residues are hydrolyzed (such as succinyl-Leu-Tyr-|-NHMec, and Leu-Tyr-Leu-|-Tyr-Trp, in which cleavage of the -Tyr-|-Leu- and -Tyr-|-Trp bonds also occurs).. In terms of biological role, cleaves peptides in various proteins in a process that requires ATP hydrolysis. Has a chymotrypsin-like activity. Plays a major role in the degradation of misfolded proteins. This is ATP-dependent Clp protease proteolytic subunit from Staphylococcus aureus (strain Mu3 / ATCC 700698).